The chain runs to 393 residues: Putative odorant receptor 69a, isoform A (393 aa).

At 1–39 (MQLHDHMKYIDLGCKMACIPRYQWKGRPTERQFYASEQR) the chain is on the cytoplasmic side. Residues 40-60 (IVFLLGTICQIFQITGVLIYW) form a helical membrane-spanning segment. Topologically, residues 61–76 (YCNGRLATETGTFVAQ) are extracellular. Residues 77–97 (LSEMCSSFCLTFVGFCNVYAI) traverse the membrane as a helical segment. Topologically, residues 98–139 (STNRNQIETLLEELHQIYPRYRKNHYRCQHYFDMAMTIMRIE) are cytoplasmic. The helical transmembrane segment at 140–160 (FLFYMILYVYYNSAPLWVLLW) threads the bilayer. Residues 161–189 (EHLHEEYDLSFKTQTNTWFPWKVHGSALG) lie on the Extracellular side of the membrane. Residues 190–210 (FGMAVLSITVGSFVGVGFSIV) traverse the membrane as a helical segment. Residues 211 to 269 (TQNLICLLTFQLKLHYDGISSQLVSLDCRRPGAHKELSILIAHHSRILQLGDQVNDIMN) are Cytoplasmic-facing. A helical transmembrane segment spans residues 270 to 290 (FVFGSSLVGATIAICMSSVSI). Over 291–304 (MLLDLASAFKYASG) the chain is Extracellular. Residues 305-325 (LVAFVLYNFVICYMGTEVTLA) traverse the membrane as a helical segment. The Cytoplasmic segment spans residues 326–365 (SGKVLPAAFYNNWYEGDLVYRRMLLILMMRATKPYMWKTY). Residues 366-386 (KLAPVSITTYMATLKFSYQMF) traverse the membrane as a helical segment. Residues 387-393 (TCVRSLK) are Extracellular-facing.

This sequence belongs to the insect chemoreceptor superfamily. Heteromeric odorant receptor channel (TC 1.A.69) family. Or49a subfamily. As to quaternary structure, interacts with Orco. Complexes exist early in the endomembrane system in olfactory sensory neurons (OSNs), coupling these complexes to the conserved ciliary trafficking pathway. In terms of tissue distribution, expressed in olfactory sensory neurons in the antenna.

The protein localises to the cell membrane. Functionally, odorant receptor which mediates acceptance or avoidance behavior, depending on its substrates. The odorant receptor repertoire encodes a large collection of odor stimuli that vary widely in identity, intensity, and duration. May form a complex with Orco to form odorant-sensing units, providing sensitive and prolonged odorant signaling and calcium permeability. The sequence is that of Putative odorant receptor 69a, isoform A (Or69a) from Drosophila melanogaster (Fruit fly).